Here is a 701-residue protein sequence, read N- to C-terminus: Octapeptide-repeat antigen (701 aa).

N-linked (GlcNAc...) asparagine glycosylation is found at Asn-40, Asn-41, Asn-76, Asn-111, Asn-127, Asn-139, Asn-181, Asn-189, Asn-311, Asn-334, Asn-344, Asn-477, and Asn-557. Positions 120–140 (IENEEKSNGSRKSSNKQKYNE) are disordered. Positions 641-701 (LSGSSTGSMN…IKSGSKDHIK (61 aa)) are disordered. Residues 642–655 (SGSSTGSMNNGKSG) show a composition bias toward low complexity. 6 consecutive repeat copies span residues 653–660 (KSGSKSDI), 661–668 (KGGSKDDI), 669–676 (KSGSKDDI), 677–684 (KSGSKADI), 685–692 (KSGSKDDI), and 693–700 (KSGSKDHI). The 6 X 8 AA approximate tandem repeats stretch occupies residues 653-700 (KSGSKSDIKGGSKDDIKSGSKDDIKSGSKADIKSGSKDDIKSGSKDHI). The segment covering 656–701 (SKSDIKGGSKDDIKSGSKDDIKSGSKADIKSGSKDDIKSGSKDHIK) has biased composition (basic and acidic residues).

The protein belongs to the ATP-dependent AMP-binding enzyme family.

The protein resides in the parasitophorous vacuole. The sequence is that of Octapeptide-repeat antigen from Plasmodium falciparum (isolate NF7 / Ghana).